A 188-amino-acid chain; its full sequence is Crossover junction endodeoxyribonuclease RuvC (188 aa).

Active-site residues include Asp7, Glu68, and Asp141. The Mg(2+) site is built by Asp7, Glu68, and Asp141.

The protein belongs to the RuvC family. In terms of assembly, homodimer which binds Holliday junction (HJ) DNA. The HJ becomes 2-fold symmetrical on binding to RuvC with unstacked arms; it has a different conformation from HJ DNA in complex with RuvA. In the full resolvosome a probable DNA-RuvA(4)-RuvB(12)-RuvC(2) complex forms which resolves the HJ. Requires Mg(2+) as cofactor.

Its subcellular location is the cytoplasm. The catalysed reaction is Endonucleolytic cleavage at a junction such as a reciprocal single-stranded crossover between two homologous DNA duplexes (Holliday junction).. Functionally, the RuvA-RuvB-RuvC complex processes Holliday junction (HJ) DNA during genetic recombination and DNA repair. Endonuclease that resolves HJ intermediates. Cleaves cruciform DNA by making single-stranded nicks across the HJ at symmetrical positions within the homologous arms, yielding a 5'-phosphate and a 3'-hydroxyl group; requires a central core of homology in the junction. The consensus cleavage sequence is 5'-(A/T)TT(C/G)-3'. Cleavage occurs on the 3'-side of the TT dinucleotide at the point of strand exchange. HJ branch migration catalyzed by RuvA-RuvB allows RuvC to scan DNA until it finds its consensus sequence, where it cleaves and resolves the cruciform DNA. This is Crossover junction endodeoxyribonuclease RuvC from Mycobacterium tuberculosis (strain ATCC 25177 / H37Ra).